The sequence spans 1871 residues: Callose synthase 4 (1871 aa).

The Cytoplasmic portion of the chain corresponds to 1–491 (MNQPNRGQIL…FWHLFRSFDR (491 aa)). Residues 492 to 512 (MWSFYILSLQAMIIIAWNETS) form a helical membrane-spanning segment. Residues 513 to 521 (ESGGAVFHK) are Extracellular-facing. A helical membrane pass occupies residues 522–542 (VLSVFITAAKLNLFQAFLDIA). At 543-558 (LSWKARHSMSTHVRQR) the chain is on the cytoplasmic side. Residues 559 to 579 (YIFKAVAAAVWVLLMPLTYAY) form a helical membrane-spanning segment. The Extracellular segment spans residues 580-583 (SHTS). The chain crosses the membrane as a helical span at residues 584 to 604 (IFIVAILIYLSPNMLPEMLLL). At 605 to 640 (IPSIRRTLEKSDFRPVKLIMWWSQPELYIGRGMHES) the chain is on the cytoplasmic side. Residues 641–661 (AWSIYKYMMFWIVLLTSKLAF) traverse the membrane as a helical segment. Residues 662-701 (SYYVEQIKPLMGPTKEIMSVPMPGYWLPEFFPHVKNNRGV) lie on the Extracellular side of the membrane. A helical membrane pass occupies residues 702–724 (VITLWSPVILVYFMDTQIWYAIV). At 725–1441 (STLVGGLYGA…FDFFRMLSCY (717 aa)) the chain is on the cytoplasmic side. A helical transmembrane segment spans residues 1442–1462 (FTTVGFYFCSMLTVLTVYVFL). At 1463 to 1485 (YGRLYLVLSGVEKELGNKPMMME) the chain is on the extracellular side. A helical membrane pass occupies residues 1486–1506 (IILASQSFVQIVFLMAMPMIM). The Cytoplasmic segment spans residues 1507-1516 (EIGLERGFYD). The chain crosses the membrane as a helical span at residues 1517–1537 (ALFDFVLMQLQLASVFFTFQL). Residues 1538–1580 (GTKFHYYCKTLLHGGAEYRGTGRGFVVFHAKFAENYRFYSRSH) lie on the Extracellular side of the membrane. Transmembrane regions (helical) follow at residues 1581 to 1601 (FVKA…GPTY) and 1602 to 1622 (IGLF…APFL). The Extracellular portion of the chain corresponds to 1623–1675 (FNPSGFEWHEIVEDWADWKKWIEYDNGGIGVPPEKSWESWWEKDIEHLQHSGK). Residues 1676-1696 (WGIVVEIFFALRFFIFQYGLV) form a helical membrane-spanning segment. Residues 1697-1708 (YQLSAFKNKYSS) lie on the Cytoplasmic side of the membrane. The helical transmembrane segment at 1709 to 1729 (LWVFGASWLLILILLLTVTVL) threads the bilayer. The Extracellular portion of the chain corresponds to 1730 to 1741 (DYARRRLGTEFQ). The helical transmembrane segment at 1742 to 1762 (LLFRIIKVSLFLAFMAIFITL) threads the bilayer. Over 1763-1772 (MTCRLILPQD) the chain is Cytoplasmic. The helical transmembrane segment at 1773–1793 (VFLCMLALIPTGWGLLLIAQS) threads the bilayer. Residues 1794–1815 (CKPLIQQPGIWSWVMTLAWVYD) are Extracellular-facing. The chain crosses the membrane as a helical span at residues 1816-1836 (LVMGSLLFIPIAFMAWFPFIS). At 1837 to 1871 (EFQTRMLFNQAFSRGLHISRILSGQRKHRSSKNKD) the chain is on the cytoplasmic side.

It belongs to the glycosyltransferase 48 family.

It localises to the cell membrane. It carries out the reaction [(1-&gt;3)-beta-D-glucosyl](n) + UDP-alpha-D-glucose = [(1-&gt;3)-beta-D-glucosyl](n+1) + UDP + H(+). Functionally, involved in callose synthesis at the forming cell plate during cytokinesis. During plant growth and development, callose is found as a transitory component of the cell plate in dividing cells, is a major component of pollen mother cell walls and pollen tubes, and is found as a structural component of plasmodesmatal canals. The chain is Callose synthase 4 (CALS4) from Arabidopsis thaliana (Mouse-ear cress).